The primary structure comprises 343 residues: L-lysine cyclodeaminase (343 aa).

The protein belongs to the ornithine cyclodeaminase/mu-crystallin family. Requires NAD(+) as cofactor.

The enzyme catalyses L-lysine = L-pipecolate + NH4(+). Its pathway is antibiotic biosynthesis. Inhibited by nipecotic acid and thiazolidine-2-carboxylic acid. In terms of biological role, converts L-lysine to L-pipecolate, which is incorporated into multiple secondary metabolite products, including rapamycin, tobulysin, virginiamycin and pristinamycin. The protein is L-lysine cyclodeaminase (rapL) of Streptomyces rapamycinicus (strain ATCC 29253 / DSM 41530 / NRRL 5491 / AYB-994) (Streptomyces hygroscopicus (strain ATCC 29253)).